The following is a 272-amino-acid chain: Acyl-[acyl-carrier-protein]--UDP-N-acetylglucosamine O-acyltransferase (272 aa).

Belongs to the transferase hexapeptide repeat family. LpxA subfamily. In terms of assembly, homotrimer.

The protein resides in the cytoplasm. The catalysed reaction is a (3R)-hydroxyacyl-[ACP] + UDP-N-acetyl-alpha-D-glucosamine = a UDP-3-O-[(3R)-3-hydroxyacyl]-N-acetyl-alpha-D-glucosamine + holo-[ACP]. It functions in the pathway glycolipid biosynthesis; lipid IV(A) biosynthesis; lipid IV(A) from (3R)-3-hydroxytetradecanoyl-[acyl-carrier-protein] and UDP-N-acetyl-alpha-D-glucosamine: step 1/6. Functionally, involved in the biosynthesis of lipid A, a phosphorylated glycolipid that anchors the lipopolysaccharide to the outer membrane of the cell. This chain is Acyl-[acyl-carrier-protein]--UDP-N-acetylglucosamine O-acyltransferase, found in Methylobacterium radiotolerans (strain ATCC 27329 / DSM 1819 / JCM 2831 / NBRC 15690 / NCIMB 10815 / 0-1).